Consider the following 308-residue polypeptide: Probable manganese-dependent inorganic pyrophosphatase (308 aa).

H9, D13, D15, D75, H97, and D149 together coordinate Mn(2+).

Belongs to the PPase class C family. The cofactor is Mn(2+).

It is found in the cytoplasm. The enzyme catalyses diphosphate + H2O = 2 phosphate + H(+). This chain is Probable manganese-dependent inorganic pyrophosphatase, found in Listeria welshimeri serovar 6b (strain ATCC 35897 / DSM 20650 / CCUG 15529 / CIP 8149 / NCTC 11857 / SLCC 5334 / V8).